We begin with the raw amino-acid sequence, 347 residues long: Farnesyl pyrophosphate synthase (347 aa).

Isopentenyl diphosphate contacts are provided by Lys-50, Arg-53, and Gln-88. The Mg(2+) site is built by Asp-95 and Asp-99. Arg-104 contacts dimethylallyl diphosphate. Isopentenyl diphosphate is bound at residue Arg-105. Dimethylallyl diphosphate is bound by residues Lys-192, Thr-193, Gln-232, Lys-249, and Lys-258.

This sequence belongs to the FPP/GGPP synthase family. In terms of assembly, interacts with spo9. Mg(2+) is required as a cofactor.

The protein localises to the cytoplasm. The protein resides in the nucleus. It carries out the reaction isopentenyl diphosphate + dimethylallyl diphosphate = (2E)-geranyl diphosphate + diphosphate. The catalysed reaction is isopentenyl diphosphate + (2E)-geranyl diphosphate = (2E,6E)-farnesyl diphosphate + diphosphate. It functions in the pathway isoprenoid biosynthesis; farnesyl diphosphate biosynthesis; farnesyl diphosphate from geranyl diphosphate and isopentenyl diphosphate: step 1/1. It participates in isoprenoid biosynthesis; geranyl diphosphate biosynthesis; geranyl diphosphate from dimethylallyl diphosphate and isopentenyl diphosphate: step 1/1. In terms of biological role, farnesyl pyrophosphate synthase; part of the second module of ergosterol biosynthesis pathway that includes the middle steps of the pathway. Fps1 catalyzes the sequential condensation of isopentenyl pyrophosphate with dimethylallyl pyrophosphate, and then with the resultant geranylpyrophosphate to the ultimate product farnesyl pyrophosphate. The second module is carried out in the vacuole and involves the formation of farnesyl diphosphate, which is also an important intermediate in the biosynthesis of ubiquinone, dolichol, heme and prenylated proteins. Activity by the mevalonate kinase erg12 first converts mevalonate into 5-phosphomevalonate. 5-phosphomevalonate is then further converted to 5-diphosphomevalonate by the phosphomevalonate kinase erg8. The diphosphomevalonate decarboxylase mvd1 then produces isopentenyl diphosphate. The isopentenyl-diphosphate delta-isomerase idi1 then catalyzes the 1,3-allylic rearrangement of the homoallylic substrate isopentenyl (IPP) to its highly electrophilic allylic isomer, dimethylallyl diphosphate (DMAPP). Finally the farnesyl diphosphate synthase fps1 catalyzes the sequential condensation of isopentenyl pyrophosphate with dimethylallyl pyrophosphate, and then with the resultant geranylpyrophosphate to the ultimate product farnesyl pyrophosphate. This Schizosaccharomyces pombe (strain 972 / ATCC 24843) (Fission yeast) protein is Farnesyl pyrophosphate synthase.